The chain runs to 250 residues: PF03932 family protein CutC (250 aa).

The protein belongs to the CutC family.

The protein resides in the cytoplasm. The polypeptide is PF03932 family protein CutC (Vibrio vulnificus (strain YJ016)).